The chain runs to 441 residues: Putative F-box/FBD/LRR-repeat protein At4g00315 (441 aa).

An F-box domain is found at 1–47 (MDKTSQLPDELLVKVLSFLPTKDAVRTSLLSMRWKSLWMWLPKLEYD). LRR repeat units follow at residues 57–82 (QGLA…SLKL), 87–115 (IGSI…SLKL), 137–164 (ILKL…FLGR), 165–190 (VTYS…VVER), 211–236 (LKMS…KVTD), 243–271 (SDNE…DFVL), 293–318 (LGVY…KICS), and 319–344 (CDSD…EAYV). Residues 358–410 (QWGNQLNCVPKCLLSSLETFKWSEMYGLLQNQMDVAKYILRNARCLKSATIFF) enclose the FBD domain.

This is Putative F-box/FBD/LRR-repeat protein At4g00315 from Arabidopsis thaliana (Mouse-ear cress).